We begin with the raw amino-acid sequence, 211 residues long: SAGA-associated factor 11 homolog 2 (211 aa).

The SGF11-type zinc-finger motif lies at 115 to 136 (CTCPNCDRLVAAARFAPHLEKC). Residues 149–211 (RRLATKEGSS…GSKKNNGKTF (63 aa)) form a disordered region. Residues 157–166 (SSASTSSTST) are compositionally biased toward low complexity. Ser-187 carries the post-translational modification Phosphoserine. Positions 197–211 (SSRNNGSKKNNGKTF) are enriched in low complexity.

Belongs to the SGF11 family. Component of some SAGA transcription coactivator-HAT complexes, at least composed of Ada2b, not/nonstop, Pcaf/Gcn5, Sgf11 and Spt3. Within the SAGA complex, Sgf11, e(y)2, and not/nonstop form an additional subcomplex of SAGA called the DUB module (deubiquitination module). Interacts directly with not/nonstop. Interacts with the AMEX complex component xmas-2. Interacts with Cbp80; important for promoter recruitment of Sgf11 that is not associated with the DUB module.

Its subcellular location is the nucleus. It is found in the nucleoplasm. It localises to the cytoplasm. Component of the transcription regulatory histone acetylation (HAT) complex SAGA, a multiprotein complex that activates transcription by remodeling chromatin and mediating histone acetylation and deubiquitination. Within the SAGA complex, participates in a subcomplex that specifically deubiquitinates histone H2B. The SAGA complex is recruited to specific gene promoters by activators, where it is required for transcription. Required for nuclear receptor-mediated transactivation. Binds independently on SAGA to promoters in an RNA-dependent manner. Binds to mRNA and is essential for total mRNA export from the nucleus. Required to counteract heterochromatin silencing. Controls the development of neuronal connectivity in visual system by being required for accurate axon targeting in the optic lobe. Required for expression of ecdysone-induced genes such as br/broad. This is SAGA-associated factor 11 homolog 2 from Drosophila grimshawi (Hawaiian fruit fly).